Here is a 484-residue protein sequence, read N- to C-terminus: ATP synthase subunit beta (484 aa).

169-176 (GGAGVGKT) is a binding site for ATP.

It belongs to the ATPase alpha/beta chains family. As to quaternary structure, F-type ATPases have 2 components, CF(1) - the catalytic core - and CF(0) - the membrane proton channel. CF(1) has five subunits: alpha(3), beta(3), gamma(1), delta(1), epsilon(1). CF(0) has three main subunits: a(1), b(2) and c(9-12). The alpha and beta chains form an alternating ring which encloses part of the gamma chain. CF(1) is attached to CF(0) by a central stalk formed by the gamma and epsilon chains, while a peripheral stalk is formed by the delta and b chains.

The protein localises to the cell membrane. It catalyses the reaction ATP + H2O + 4 H(+)(in) = ADP + phosphate + 5 H(+)(out). Its function is as follows. Produces ATP from ADP in the presence of a proton gradient across the membrane. The catalytic sites are hosted primarily by the beta subunits. In Nocardioides sp. (strain ATCC BAA-499 / JS614), this protein is ATP synthase subunit beta.